The following is a 137-amino-acid chain: Proofreading thioesterase EntH (137 aa).

E63 functions as the Nucleophile or proton acceptor in the catalytic mechanism.

It belongs to the thioesterase PaaI family. In terms of assembly, homotetramer. Dimer of dimers. Interacts specifically with the aryl carrier protein (ArCP) domain of EntB.

Its subcellular location is the cytoplasm. It participates in siderophore biosynthesis; enterobactin biosynthesis. In terms of biological role, required for optimal enterobactin synthesis. Acts as a proofreading enzyme that prevents EntB misacylation by hydrolyzing the thioester bound existing between EntB and wrongly charged molecules. The polypeptide is Proofreading thioesterase EntH (Cronobacter sakazakii (strain ATCC BAA-894) (Enterobacter sakazakii)).